The primary structure comprises 30 residues: MELILNKEYRLVIIVLISVYYRYRFFLLLF.

The chain crosses the membrane as a helical span at residues tyrosine 9–phenylalanine 26.

The protein localises to the plastid. Its subcellular location is the chloroplast membrane. This is an uncharacterized protein from Marchantia polymorpha (Common liverwort).